Consider the following 219-residue polypeptide: Swarming motility regulation protein RssB (219 aa).

One can recognise a Response regulatory domain in the interval 2 to 116 (NILLVEDDLQ…ELISRVKAVN (115 aa)). Asp51 is subject to 4-aspartylphosphate. The segment at residues 124–218 (SQTWSLGALY…VRGIGYLLKK (95 aa)) is a DNA-binding region (ompR/PhoB-type).

The protein localises to the cytoplasm. Its function is as follows. Member of the two-component regulatory system RssA/RssB involved in regulation of swarming motility which has been shown to be inhibited by saturated fatty acids. RssA/RssB regulates cellular fatty acid composition, hemolysin production and cell surface topography. RssA/RssB negatively regulates the activity of SlhBA. It can also act as a negative regulator for the control of the swarming initiation. RssB binds its own promoter. The chain is Swarming motility regulation protein RssB (rssB) from Serratia marcescens.